The chain runs to 101 residues: uncharacterized protein (101 aa).

The span at 1 to 11 shows a compositional bias: basic and acidic residues; it reads MSDEGYRELVE. The tract at residues 1-26 is disordered; it reads MSDEGYRELVESKSAPTTPGPWSPDR.

This is an uncharacterized protein from Torque teno canis virus (isolate Cf-TTV10).